The sequence spans 271 residues: Aquaporin-11 (271 aa).

Residues 1–14 lie on the Cytoplasmic side of the membrane; the sequence is MSPLLGLRSELQDT. Residues 15-35 form a helical membrane-spanning segment; that stretch reads CTSLGLMLSVVLLMGLARVVA. The Lumenal portion of the chain corresponds to 36-41; sequence RQQLHR. A helical transmembrane segment spans residues 42–62; the sequence is PVAHAFVLEFLATFQLCCCTH. Residues 63 to 74 are Cytoplasmic-facing; it reads ELQLLSEQHPAH. A helical transmembrane segment spans residues 75–95; sequence PTWTLTLVYFFSLVHGLTLVG. Residues 96–163 lie on the Lumenal side of the membrane; sequence TSSNPCGVMM…ACKNPIRVDL (68 aa). Residues 99–101 carry the NPC motif; the sequence is NPC. A helical membrane pass occupies residues 164 to 184; the sequence is LKAVITEAVCSFLFHSALLHF. Residues 185–194 are Cytoplasmic-facing; it reads QEVRTKLRIH. The chain crosses the membrane as a helical span at residues 195–215; it reads LLAALITFLVYAGGSLTGAVF. The NPA signature appears at 216–218; it reads NPA. Topologically, residues 216–234 are lumenal; the sequence is NPALALSLHFMCFDEAFPQ. Residues 235–255 traverse the membrane as a helical segment; that stretch reads FFIVYWLAPSLGILLMILMFS. At 256–271 the chain is on the cytoplasmic side; the sequence is FFLPWLHNNHTINKKE.

Belongs to the MIP/aquaporin (TC 1.A.8) family. AQP11/AQP12 subfamily. In terms of assembly, homodimer; disulfide-linked. Homotetramer. Can also form homomultimer. Post-translationally, not glycosylated. In terms of tissue distribution, detected in the sperm head and tail (at protein level). Expressed in subcutaneous adipocytes. Expressed in testis, kidney and ejaculated spermatozoa.

It is found in the endoplasmic reticulum membrane. The protein localises to the cytoplasmic vesicle membrane. Its subcellular location is the cell membrane. It carries out the reaction H2O(in) = H2O(out). It catalyses the reaction glycerol(in) = glycerol(out). The catalysed reaction is H2O2(out) = H2O2(in). Functionally, channel protein that facilitates the transport of water, glycerol and hydrogen peroxide across membrane of cell or organelles guaranteeing intracellular homeostasis in several organes like liver, kidney and brain. In situation of stress, participates in endoplasmic reticulum (ER) homeostasis by regulating redox homeostasis through the transport of hydrogen peroxide across the endoplasmic reticulum membrane thereby regulating the oxidative stress through the NADPH oxidase 2 pathway. Plays a role by maintaining an environment suitable for translation or protein foldings in the ER lumen namely by participating in the PKD1 glycosylation processing resulting in regulation of PKD1 membrane trafficking thereby preventing the accumulation of unfolding protein in ER. Plays a role in the proximal tubule function by regulating its endosomal acidification. May play a role in postnatal kidney development. The polypeptide is Aquaporin-11 (Homo sapiens (Human)).